The following is a 107-amino-acid chain: Prokineticin-2 (107 aa).

The signal sequence occupies residues 1–26 (MEDPRCAPLLLLLLLPLLLTPPAGDA). Intrachain disulfides connect C33–C45, C39–C57, C44–C85, C67–C93, and C87–C103.

The protein belongs to the AVIT (prokineticin) family. In terms of tissue distribution, expressed at high levels in testis and at lower levels in brain, lung, ovary, spleen, thymus and uterus.

The protein localises to the secreted. Functionally, may function as an output molecule from the suprachiasmatic nucleus (SCN) that transmits behavioral circadian rhythm. May also function locally within the SCN to synchronize output. Potently contracts gastrointestinal (GI) smooth muscle. The chain is Prokineticin-2 (Prok2) from Rattus norvegicus (Rat).